A 68-amino-acid chain; its full sequence is Conotoxin Em11.5 (68 aa).

Positions 1–26 (MMFRLTSVGCFLLVIACLNLFQVVLT) are cleaved as a signal peptide. Disulfide bonds link Cys29-Cys43, Cys36-Cys48, Cys42-Cys52, and Cys47-Cys56. The residue at position 60 (Phe60) is a Phenylalanine amide. A propeptide spanning residues 64–68 (ATFQE) is cleaved from the precursor.

The protein belongs to the conotoxin I2 superfamily. In terms of tissue distribution, expressed by the venom duct.

The protein localises to the secreted. In Conus emaciatus (False virgin cone), this protein is Conotoxin Em11.5.